Here is a 142-residue protein sequence, read N- to C-terminus: ATP synthase epsilon chain (142 aa).

Belongs to the ATPase epsilon chain family. F-type ATPases have 2 components, CF(1) - the catalytic core - and CF(0) - the membrane proton channel. CF(1) has five subunits: alpha(3), beta(3), gamma(1), delta(1), epsilon(1). CF(0) has three main subunits: a, b and c.

It localises to the cell inner membrane. In terms of biological role, produces ATP from ADP in the presence of a proton gradient across the membrane. This is ATP synthase epsilon chain from Pasteurella multocida (strain Pm70).